A 160-amino-acid chain; its full sequence is Nitrate reductase [NADH] (160 aa).

An FAD-binding site is contributed by T37.

The protein belongs to the nitrate reductase family. As to quaternary structure, homodimer. FAD serves as cofactor. Requires heme as cofactor. The cofactor is Mo-molybdopterin.

It carries out the reaction nitrite + NAD(+) + H2O = nitrate + NADH + H(+). In terms of biological role, nitrate reductase is a key enzyme involved in the first step of nitrate assimilation in plants, fungi and bacteria. This chain is Nitrate reductase [NADH] (NIA), found in Lotus tetragonolobus (Winged pea).